The chain runs to 947 residues: Protocadherin alpha-4 (947 aa).

The signal sequence occupies residues Met1–Ser29. Cadherin domains lie at Gln30–Phe133, Pro134–Phe242, Asp243–Leu350, Glu351–Phe455, Ala456–Leu565, and Ser573–Arg681. The Extracellular segment spans residues Gln30 to Asn697. A disulfide bridge connects residues Cys96 and Cys102. Residues Asn257 and Asn265 are each glycosylated (N-linked (GlcNAc...) asparagine). Thr438 is a glycosylation site (O-linked (Man) threonine). Residues Ser440 and Ser442 are each glycosylated (O-linked (Man) serine). Residue Asn548 is glycosylated (N-linked (GlcNAc...) asparagine). Residues Val698–Tyr718 form a helical membrane-spanning segment. Topologically, residues Thr719–Gln947 are cytoplasmic. PXXP repeat units lie at residues Pro734–Pro737, Pro774–Ser777, Pro796–Pro799, Pro829–Pro832, Pro870–Pro873, and Pro888–Pro891. Residues Pro734–Pro891 form a 6 X 4 AA repeats of P-X-X-P region. The required for interaction with FYN stretch occupies residues Val738–Gln947. Disordered regions lie at residues Gly761–Tyr805 and Ile824–Pro853. The interval Pro891 to Gln947 is disordered. Residues Asp906–Lys920 are compositionally biased toward basic and acidic residues.

As to quaternary structure, forms homodimers in trans (molecules expressed by two different cells). Forms promiscuous heterodimers in cis (at the plasma membrane of the same cell) with other protocadherins. Interacts with FYN. In terms of tissue distribution, detected in brain throughout embryonic development. Detected in adult brain, in particular in cerebellum and forebrain.

It is found in the cell membrane. In terms of biological role, calcium-dependent cell-adhesion protein involved in cells self-recognition and non-self discrimination. Thereby, it is involved in the establishment and maintenance of specific neuronal connections in the brain. The chain is Protocadherin alpha-4 from Mus musculus (Mouse).